The primary structure comprises 280 residues: F-box only protein 27 (280 aa).

The interval 1–26 is disordered; it reads MGAWASRGRAARVPAPEPESEPEEAL. An F-box domain is found at 25-72; it reads ALDLSQLPPELLLVVLSHVPPRTLLGRCRQVCRGWRALVDGQALWLLI. Residues 100-277 form the FBA domain; it reads PCPLGRFCAR…VTNSSVIVRV (178 aa).

As to quaternary structure, part of a SCF (SKP1-cullin-F-box) protein ligase complex. Interacts with SKP1 and CUL1.

Its function is as follows. Substrate-recognition component of the SCF (SKP1-CUL1-F-box protein)-type E3 ubiquitin ligase complex. Able to recognize and bind complex-type oligosaccharides. This chain is F-box only protein 27 (FBXO27), found in Macaca fascicularis (Crab-eating macaque).